A 265-amino-acid polypeptide reads, in one-letter code: Putative methyltransferase 235L (265 aa).

The signal sequence occupies residues 1-17 (MDICICYFFTILTTISC).

This sequence belongs to the methyltransferase superfamily.

The polypeptide is Putative methyltransferase 235L (Acheta domesticus (House cricket)).